The chain runs to 91 residues: DNA-directed RNA polymerase subunit omega (91 aa).

The protein belongs to the RNA polymerase subunit omega family. In terms of assembly, the RNAP catalytic core consists of 2 alpha, 1 beta, 1 beta' and 1 omega subunit. When a sigma factor is associated with the core the holoenzyme is formed, which can initiate transcription.

It carries out the reaction RNA(n) + a ribonucleoside 5'-triphosphate = RNA(n+1) + diphosphate. In terms of biological role, promotes RNA polymerase assembly. Latches the N- and C-terminal regions of the beta' subunit thereby facilitating its interaction with the beta and alpha subunits. The sequence is that of DNA-directed RNA polymerase subunit omega from Actinobacillus pleuropneumoniae serotype 5b (strain L20).